The chain runs to 165 residues: Large ribosomal subunit protein uL10 (165 aa).

This sequence belongs to the universal ribosomal protein uL10 family. In terms of assembly, part of the ribosomal stalk of the 50S ribosomal subunit. The N-terminus interacts with L11 and the large rRNA to form the base of the stalk. The C-terminus forms an elongated spine to which L12 dimers bind in a sequential fashion forming a multimeric L10(L12)X complex.

In terms of biological role, forms part of the ribosomal stalk, playing a central role in the interaction of the ribosome with GTP-bound translation factors. The polypeptide is Large ribosomal subunit protein uL10 (Serratia proteamaculans (strain 568)).